A 187-amino-acid chain; its full sequence is Adenylate kinase (187 aa).

12–17 serves as a coordination point for ATP; it reads GAGKGT. The tract at residues 32 to 61 is NMP; the sequence is STGDIFRANLAENTELGQKARQFMDAGDLV. Residues T33, R38, 59-61, 87-90, and Q94 contribute to the AMP site; these read DLV and GYPR. An LID region spans residues 128–134; that stretch reads GRGRADD. R129 serves as a coordination point for ATP. Residues R131 and R142 each contribute to the AMP site. R170 provides a ligand contact to ATP.

Belongs to the adenylate kinase family. As to quaternary structure, monomer.

The protein resides in the cytoplasm. It carries out the reaction AMP + ATP = 2 ADP. Its pathway is purine metabolism; AMP biosynthesis via salvage pathway; AMP from ADP: step 1/1. Functionally, catalyzes the reversible transfer of the terminal phosphate group between ATP and AMP. Plays an important role in cellular energy homeostasis and in adenine nucleotide metabolism. This Leuconostoc mesenteroides subsp. mesenteroides (strain ATCC 8293 / DSM 20343 / BCRC 11652 / CCM 1803 / JCM 6124 / NCDO 523 / NBRC 100496 / NCIMB 8023 / NCTC 12954 / NRRL B-1118 / 37Y) protein is Adenylate kinase.